A 283-amino-acid polypeptide reads, in one-letter code: Glutamyl-Q tRNA(Asp) synthetase (283 aa).

Residues 5–9 (RFAPT) and Glu-41 each bind L-glutamate. The 'HIGH' region signature appears at 8–18 (PTPSGPLHLGS). Zn(2+) is bound by residues Cys-97, Cys-99, Tyr-111, and Cys-115. L-glutamate is bound by residues Tyr-168 and Arg-186. The short motif at 224 to 228 (KLSKQ) is the 'KMSKS' region element. An ATP-binding site is contributed by Lys-227.

It belongs to the class-I aminoacyl-tRNA synthetase family. GluQ subfamily. The cofactor is Zn(2+).

Its function is as follows. Catalyzes the tRNA-independent activation of glutamate in presence of ATP and the subsequent transfer of glutamate onto a tRNA(Asp). Glutamate is transferred on the 2-amino-5-(4,5-dihydroxy-2-cyclopenten-1-yl) moiety of the queuosine in the wobble position of the QUC anticodon. This is Glutamyl-Q tRNA(Asp) synthetase from Idiomarina loihiensis (strain ATCC BAA-735 / DSM 15497 / L2-TR).